A 346-amino-acid polypeptide reads, in one-letter code: Probable electron transfer flavoprotein subunit alpha, mitochondrial (346 aa).

285–313 (LYVAVGISGAIQHLAGMKESKMIVAINKD) provides a ligand contact to FAD.

This sequence belongs to the ETF alpha-subunit/FixB family. In terms of assembly, heterodimer of an alpha and a beta subunit. FAD is required as a cofactor.

It localises to the mitochondrion matrix. The electron transfer flavoprotein serves as a specific electron acceptor for several dehydrogenases, including five acyl-CoA dehydrogenases, glutaryl-CoA and sarcosine dehydrogenase. It transfers the electrons to the main mitochondrial respiratory chain via ETF-ubiquinone oxidoreductase (ETF dehydrogenase). The chain is Probable electron transfer flavoprotein subunit alpha, mitochondrial (ETF1) from Cryptococcus neoformans var. grubii (Filobasidiella neoformans var. grubii).